The sequence spans 429 residues: MKERTIQPVNNGLNGNITIPGDKSISHRAVMFGSIAEGKTTIKGFLPGADCLSTISCFKEMGVEITQNGDEVTVVGKGLEGLQEPKAVLDVGNSGTTIRLMSGILANTPFFSCVQGDESIAKRPMKRVTNPLKQMGANIDGREEGTFTPLTIRGGDLKAIEYISPVASAQVKSAILLAGLRAEGVTAVTEPHISRDHTERMLEAFGVKVTREGKTVKLSGGQKLTATDIQVPGDVSSAAFFLVAGAIIPNSKLVLQNVGMNPTRTGIIDVLEKMGATFTVDLINEGASEPAANITIETSSLKGIEIGGDIIPRLIDEIPVIALAATQAEGITVIKDAHELKVKETNRIDTVVAELTKLGARIEATDDGMIIYGKSALKGNTVNSYGDHRIGMMLAIAGCLAEGKTIIEDAEAVGVSYPTFFDELQKLAK.

The 3-phosphoshikimate site is built by Lys-23, Ser-24, and Arg-28. A phosphoenolpyruvate-binding site is contributed by Lys-23. Residues Gly-95 and Arg-123 each coordinate phosphoenolpyruvate. Residues Ser-168, Gln-170, Asp-316, and Lys-343 each coordinate 3-phosphoshikimate. Gln-170 is a binding site for phosphoenolpyruvate. The active-site Proton acceptor is the Asp-316. The phosphoenolpyruvate site is built by Arg-347 and Arg-389.

The protein belongs to the EPSP synthase family. In terms of assembly, monomer.

It localises to the cytoplasm. The catalysed reaction is 3-phosphoshikimate + phosphoenolpyruvate = 5-O-(1-carboxyvinyl)-3-phosphoshikimate + phosphate. Its pathway is metabolic intermediate biosynthesis; chorismate biosynthesis; chorismate from D-erythrose 4-phosphate and phosphoenolpyruvate: step 6/7. Catalyzes the transfer of the enolpyruvyl moiety of phosphoenolpyruvate (PEP) to the 5-hydroxyl of shikimate-3-phosphate (S3P) to produce enolpyruvyl shikimate-3-phosphate and inorganic phosphate. The chain is 3-phosphoshikimate 1-carboxyvinyltransferase from Bacillus cereus (strain B4264).